Consider the following 506-residue polypeptide: RNA-splicing ligase RtcB homolog (506 aa).

The Mn(2+) site is built by Asp120, Cys123, His228, His260, and His354. 227–231 (NHYAE) is a GMP binding site. Residues 354–355 (HN), 403–406 (GGSM), Ser410, 429–432 (HGAG), and Lys505 contribute to the GMP site. His429 acts as the GMP-histidine intermediate in catalysis.

It belongs to the RtcB family. As to quaternary structure, catalytic component of the tRNA-splicing ligase complex. Requires Mn(2+) as cofactor.

It catalyses the reaction a 3'-end 3'-phospho-ribonucleotide-RNA + a 5'-end dephospho-ribonucleoside-RNA + GTP = a ribonucleotidyl-ribonucleotide-RNA + GMP + diphosphate. It carries out the reaction a 3'-end 2',3'-cyclophospho-ribonucleotide-RNA + a 5'-end dephospho-ribonucleoside-RNA + GTP + H2O = a ribonucleotidyl-ribonucleotide-RNA + GMP + diphosphate + H(+). Catalytic subunit of the tRNA-splicing ligase complex that acts by directly joining spliced tRNA halves to mature-sized tRNAs by incorporating the precursor-derived splice junction phosphate into the mature tRNA as a canonical 3',5'-phosphodiester. May act as an RNA ligase with broad substrate specificity, and may function toward other RNAs. The sequence is that of RNA-splicing ligase RtcB homolog from Aedes aegypti (Yellowfever mosquito).